Here is a 201-residue protein sequence, read N- to C-terminus: Recombination protein RecR (201 aa).

The segment at 57–72 (CADCRTFTEQDVCNIC) adopts a C4-type zinc-finger fold. The 96-residue stretch at 81 to 176 (GQICVVESPA…EASRIAHGVP (96 aa)) folds into the Toprim domain.

It belongs to the RecR family.

In terms of biological role, may play a role in DNA repair. It seems to be involved in an RecBC-independent recombinational process of DNA repair. It may act with RecF and RecO. This is Recombination protein RecR from Salmonella agona (strain SL483).